We begin with the raw amino-acid sequence, 745 residues long: ATP-dependent zinc metalloprotease FtsH (745 aa).

Topologically, residues 1–11 (MNNRRNGLFRN) are cytoplasmic. The chain crosses the membrane as a helical span at residues 12 to 32 (SLFYILMFLSLMGIIYFFFGG). The Extracellular segment spans residues 33 to 131 (NSGSQTQNIR…VTAKAEESSG (99 aa)). The helical transmembrane segment at 132-152 (IWVTLLMYIAPVILMLFLFYM) threads the bilayer. Residues 153–745 (MMGQAGQGGG…SSQDDTNSQA (593 aa)) are Cytoplasmic-facing. Residue 227 to 234 (GPPGTGKT) coordinates ATP. His-449 provides a ligand contact to Zn(2+). Residue Glu-450 is part of the active site. Positions 453 and 525 each coordinate Zn(2+). Residues 630-673 (MPEKDSNEFPSEKAATFEESKRELERREAEKHAQNQSADDKQAD) are compositionally biased toward basic and acidic residues. Positions 630-745 (MPEKDSNEFP…SSQDDTNSQA (116 aa)) are disordered. Residues 690–704 (SESDASSEVSADSSV) are compositionally biased toward low complexity. The span at 705 to 745 (NSTANSATESATDSDVATSATGLPNAESATPSSQDDTNSQA) shows a compositional bias: polar residues.

This sequence in the central section; belongs to the AAA ATPase family. In the C-terminal section; belongs to the peptidase M41 family. In terms of assembly, homohexamer. It depends on Zn(2+) as a cofactor.

It localises to the cell membrane. Functionally, acts as a processive, ATP-dependent zinc metallopeptidase for both cytoplasmic and membrane proteins. Plays a role in the quality control of integral membrane proteins. This is ATP-dependent zinc metalloprotease FtsH from Lactiplantibacillus plantarum (strain ATCC BAA-793 / NCIMB 8826 / WCFS1) (Lactobacillus plantarum).